The chain runs to 435 residues: Elongation factor 1-alpha (435 aa).

Positions 4 to 229 (KPHLNLIVIG…DQLEIPPKPV (226 aa)) constitute a tr-type G domain. The segment at 13–20 (GHVDHGKS) is G1. 13-20 (GHVDHGKS) is a binding site for GTP. Residue Ser20 coordinates Mg(2+). Positions 69–73 (GVTIN) are G2. Positions 90 to 93 (DAPG) are G3. Residues 90-94 (DAPGH) and 152-155 (NKMD) each bind GTP. The segment at 152–155 (NKMD) is G4. Residues 193–195 (VAP) form a G5 region.

Belongs to the TRAFAC class translation factor GTPase superfamily. Classic translation factor GTPase family. EF-Tu/EF-1A subfamily.

The protein resides in the cytoplasm. It catalyses the reaction GTP + H2O = GDP + phosphate + H(+). Its function is as follows. GTP hydrolase that promotes the GTP-dependent binding of aminoacyl-tRNA to the A-site of ribosomes during protein biosynthesis. This chain is Elongation factor 1-alpha, found in Sulfolobus acidocaldarius (strain ATCC 33909 / DSM 639 / JCM 8929 / NBRC 15157 / NCIMB 11770).